Consider the following 436-residue polypeptide: EPS I polysaccharide export inner membrane protein EpsE (436 aa).

12 helical membrane passes run 20-40 (VLGL…NIML), 49-69 (FGLF…LATG), 91-111 (LCAF…ALYL), 132-152 (MAAI…FLYA), 160-180 (ASVS…MGPI), 184-204 (VVAL…QLVI), 234-254 (VLTT…LAAM), 261-281 (LALF…PATL), 307-327 (ALLF…LLAG), 341-361 (AAAS…SVLL), 375-395 (FAMA…ALRL), and 396-416 (GYGA…LILF).

It to E.coli bicyclomycin resistance protein (BCR).

The protein localises to the cell inner membrane. In terms of biological role, probably involved in polymerization and/or export of exopolysaccharide EPS I which functions as a virulence factor. May play a role in export of EPS I or its intermediates across the membranes. The protein is EPS I polysaccharide export inner membrane protein EpsE (epsE) of Ralstonia nicotianae (strain ATCC BAA-1114 / GMI1000) (Ralstonia solanacearum).